The sequence spans 318 residues: L-lactate dehydrogenase (318 aa).

NAD(+)-binding positions include Val-20, Asp-41, Lys-46, Tyr-71, and 85-86 (GA). Residues Gln-88, Arg-94, and 126–129 (NPVD) contribute to the substrate site. NAD(+) is bound by residues 124–126 (ATN) and Ser-149. A substrate-binding site is contributed by 154–157 (DTAR). Residues Arg-159 and His-174 each contribute to the beta-D-fructose 1,6-bisphosphate site. Residue His-181 is the Proton acceptor of the active site. Residue Tyr-226 is modified to Phosphotyrosine. Thr-235 contacts substrate.

It belongs to the LDH/MDH superfamily. LDH family. As to quaternary structure, homotetramer.

It localises to the cytoplasm. The enzyme catalyses (S)-lactate + NAD(+) = pyruvate + NADH + H(+). It functions in the pathway fermentation; pyruvate fermentation to lactate; (S)-lactate from pyruvate: step 1/1. Its activity is regulated as follows. Allosterically activated by fructose 1,6-bisphosphate (FBP). In terms of biological role, catalyzes the conversion of lactate to pyruvate. In Priestia megaterium (Bacillus megaterium), this protein is L-lactate dehydrogenase.